The primary structure comprises 656 residues: Solute carrier family 5 member 4A (656 aa).

Residues 1–28 (MASTASVSTSTASSELSSLSNNINNAAD) are Cytoplasmic-facing. The helical transmembrane segment at 29–47 (ISVIVIYFVVVMAVGVWAM) threads the bilayer. The Extracellular portion of the chain corresponds to 48-64 (LKTNRSTVGGFFLAGRS). Residues 65–85 (MTWWPMGASLFASNIGSGHFV) form a helical membrane-spanning segment. The Cytoplasmic portion of the chain corresponds to 86–105 (GLAGTGAASGIAVTAFESHS). The chain crosses the membrane as a helical span at residues 106–126 (FALLLVLGWIFVPIYIKAGVM). Residues 127 to 171 (TMPEYLKKRFGGKRLQIYLSILFLFICVILTISADIFSGAIFIKL) are Extracellular-facing. Residues 172-191 (ALGLNLYLAILILLAITAIF) traverse the membrane as a helical segment. Topologically, residues 192–208 (TITGGLASVIYTDTVQA) are cytoplasmic. Residues 209–229 (VIMLVGSFILMVFAFVEVGGY) traverse the membrane as a helical segment. The Extracellular portion of the chain corresponds to 230-270 (ESFTEKFMNAIPSVVEGDNLTINSRCYTPQPDSFHIFRDPV). Residue N248 is glycosylated (N-linked (GlcNAc...) asparagine). Residues 271–291 (TGDIPWPGTAFGMPITALWYW) form a helical membrane-spanning segment. The Cytoplasmic portion of the chain corresponds to 292–314 (CINQVIVQRCLCGKNLSHVKAAC). A helical membrane pass occupies residues 315 to 334 (ILCGYLKLLPLFFMVMPGMI). The Extracellular portion of the chain corresponds to 335–423 (SRILYTDMVA…RKKASERELL (89 aa)). A helical transmembrane segment spans residues 424–443 (IAGRLFVSVLIVTSILWVPI). At 444-455 (VEVSQGGQLVHY) the chain is on the cytoplasmic side. Residues 456–476 (TEAISSYLGPPIAAVFLVAVF) form a helical membrane-spanning segment. Residues 477-526 (CKRANEQGAFWGLMVGLVMGLIRMIAEFSYGTGSCLAPSSCPKIICGVHY) are Extracellular-facing. A helical membrane pass occupies residues 527 to 547 (LYFAIILFFVCILVILGVSYL). Over 548–634 (TKPIPDVHLH…TDTTEKPFWR (87 aa)) the chain is Cytoplasmic. The tract at residues 574 to 593 (DAEDKEENGADDRTEEDQTE) is disordered. The helical transmembrane segment at 635–655 (TVMNVNVILLLAVAAFFYGYF) threads the bilayer.

Belongs to the sodium:solute symporter (SSF) (TC 2.A.21) family. In terms of tissue distribution, expressed in small intestine. Expressed in kidney.

It localises to the cell membrane. With respect to regulation, not inhibited by phlorizin. In terms of biological role, does not function as sodium/D-glucose symporter. Generates D-glucose-induced depolarization in a pH-dependent manner, with activity in acidic conditions (pH 5) but not neutral conditions. In Mus musculus (Mouse), this protein is Solute carrier family 5 member 4A.